The chain runs to 618 residues: Glucose starvation modulator protein 1 (618 aa).

Residues 20–48 constitute a DNA-binding region (zn(2)-C6 fungal-type); that stretch reads CEFCHTKHIQCDVGRPCQNCLKRNIGKFC. A disordered region spans residues 325–353; sequence ANANTQPSHNAKLESECDSSSHSDADLEK. Positions 335-353 are enriched in basic and acidic residues; it reads AKLESECDSSSHSDADLEK. Residues 466–538 enclose the PAS domain; it reads LLDLENMAKL…QIFNELLAFG (73 aa).

This sequence belongs to the ERT1/acuK family.

It is found in the nucleus. Transcription factor which regulates nonfermentable carbon utilization. Binds specifically to 5'-CGGN(8)CGG-3' and 5'-CGGN(9)CGG-3' sequences in the promoter region. The polypeptide is Glucose starvation modulator protein 1 (GSM1) (Saccharomyces cerevisiae (strain JAY291) (Baker's yeast)).